A 29-amino-acid polypeptide reads, in one-letter code: CKSPGTPCSRGMRDCCTSCLLYSNKCRRY.

3 disulfide bridges follow: Cys-1/Cys-16, Cys-8/Cys-19, and Cys-15/Cys-26. Pro-4 and Pro-7 each carry 4-hydroxyproline.

Expressed by the venom duct.

The protein resides in the secreted. Its function is as follows. Omega-conotoxins act at presynaptic membranes, they bind and block voltage-gated calcium channels (Cav). This Conus geographus (Geography cone) protein is Omega-conotoxins GVIIA/GVIIB.